Reading from the N-terminus, the 455-residue chain is Phosphomethylpyrimidine synthase (455 aa).

Substrate is bound by residues Asn80, Met109, Tyr139, His175, 195 to 197, 236 to 239, and Glu275; these read SRG and DSLR. His279 contacts Zn(2+). Tyr302 contributes to the substrate binding site. Zn(2+) is bound at residue His343. Residues Cys423, Cys426, and Cys431 each coordinate [4Fe-4S] cluster.

Belongs to the ThiC family. Requires [4Fe-4S] cluster as cofactor.

It carries out the reaction 5-amino-1-(5-phospho-beta-D-ribosyl)imidazole + S-adenosyl-L-methionine = 4-amino-2-methyl-5-(phosphooxymethyl)pyrimidine + CO + 5'-deoxyadenosine + formate + L-methionine + 3 H(+). The protein operates within cofactor biosynthesis; thiamine diphosphate biosynthesis. Catalyzes the synthesis of the hydroxymethylpyrimidine phosphate (HMP-P) moiety of thiamine from aminoimidazole ribotide (AIR) in a radical S-adenosyl-L-methionine (SAM)-dependent reaction. This Synechococcus sp. (strain JA-2-3B'a(2-13)) (Cyanobacteria bacterium Yellowstone B-Prime) protein is Phosphomethylpyrimidine synthase.